The sequence spans 346 residues: Olfactory receptor 13D1 (346 aa).

At 1-57 (MYRFTDFDVSNISIYLNHVLFYTTQQAGDLEHMETRNYSAMTEFFLVGLSQYPELQL) the chain is on the extracellular side. N-linked (GlcNAc...) asparagine glycosylation occurs at N37. A helical transmembrane segment spans residues 58–78 (FLFLLCLIMYMIILLGNSLLI). The Cytoplasmic portion of the chain corresponds to 79 to 86 (IITILDSR). A helical transmembrane segment spans residues 87 to 107 (LHTPMYFFLGNLSFLDICYTS). Residues 108-131 (SSIPPMLIIFMSERKSISFIGCAL) lie on the Extracellular side of the membrane. A disulfide bridge links C129 with C221. The helical transmembrane segment at 132-152 (QMVVSLGLGSTECVLLAVMAY) threads the bilayer. Topologically, residues 153–171 (DHYVAICNPLRYSIIMNGV) are cytoplasmic. Residues 172-192 (LYVQMAAWSWIIGCLTSLLQT) form a helical membrane-spanning segment. Topologically, residues 193-229 (VLTMMLPFCGNNVIDHITCEILALLKLVCSDITINVL) are extracellular. A helical membrane pass occupies residues 230–249 (IMTVTNIVSLVILLLLIFIS). Residues 250–269 (YVFILSSILRINCAEGRKKA) lie on the Cytoplasmic side of the membrane. Residues 270–290 (FSTCSAHSIVVILFYGSALFM) traverse the membrane as a helical segment. Residues 291–303 (YMKPKSKNTNTSD) lie on the Extracellular side of the membrane. A glycan (N-linked (GlcNAc...) asparagine) is linked at N300. Residues 304-324 (EIIGLSYGVVSPMLNPIIYSL) traverse the membrane as a helical segment. The Cytoplasmic portion of the chain corresponds to 325-346 (RNKEVKEAVKKVLSRHLHLLKM).

It belongs to the G-protein coupled receptor 1 family.

The protein resides in the cell membrane. Odorant receptor. This Homo sapiens (Human) protein is Olfactory receptor 13D1 (OR13D1).